The following is a 427-amino-acid chain: Kynureninase (427 aa).

Pyridoxal 5'-phosphate-binding positions include Thr104, Thr105, 132–135, Asp213, His216, and Tyr238; that span reads FPSD. Lys239 is subject to N6-(pyridoxal phosphate)lysine. The pyridoxal 5'-phosphate site is built by Trp267 and Thr295.

The protein belongs to the kynureninase family. Homodimer. It depends on pyridoxal 5'-phosphate as a cofactor.

It catalyses the reaction L-kynurenine + H2O = anthranilate + L-alanine + H(+). The enzyme catalyses 3-hydroxy-L-kynurenine + H2O = 3-hydroxyanthranilate + L-alanine + H(+). The protein operates within amino-acid degradation; L-kynurenine degradation; L-alanine and anthranilate from L-kynurenine: step 1/1. It participates in cofactor biosynthesis; NAD(+) biosynthesis; quinolinate from L-kynurenine: step 2/3. Catalyzes the cleavage of L-kynurenine (L-Kyn) and L-3-hydroxykynurenine (L-3OHKyn) into anthranilic acid (AA) and 3-hydroxyanthranilic acid (3-OHAA), respectively. The chain is Kynureninase from Shouchella clausii (strain KSM-K16) (Alkalihalobacillus clausii).